The sequence spans 83 residues: Putative membrane protein insertion efficiency factor (83 aa).

The protein belongs to the UPF0161 family.

It is found in the cell membrane. Its function is as follows. Could be involved in insertion of integral membrane proteins into the membrane. In Streptococcus thermophilus (strain ATCC BAA-250 / LMG 18311), this protein is Putative membrane protein insertion efficiency factor.